A 461-amino-acid polypeptide reads, in one-letter code: Tubulin gamma-1 chain (461 aa).

142–148 (AGGTGSG) is a binding site for GTP.

This sequence belongs to the tubulin family.

The protein localises to the cytoplasm. It is found in the cytoskeleton. Its subcellular location is the microtubule organizing center. The protein resides in the centrosome. In terms of biological role, tubulin is the major constituent of microtubules. The gamma chain is found at microtubule organizing centers (MTOC) such as the spindle poles or the centrosome, suggesting that it is involved in the minus-end nucleation of microtubule assembly. The sequence is that of Tubulin gamma-1 chain from Euplotoides octocarinatus (Freshwater ciliate).